A 345-amino-acid polypeptide reads, in one-letter code: Platelet-derived growth factor C (345 aa).

Residues 1 to 22 form the signal peptide; the sequence is MLLLGLLLLTSALAGQRTGTRA. Residues 24–33 are compositionally biased toward polar residues; it reads SNLSSKLQLS. A disordered region spans residues 24–45; that stretch reads SNLSSKLQLSSDKEQNGVQDPR. N25 carries an N-linked (GlcNAc...) asparagine glycan. The span at 34–45 shows a compositional bias: basic and acidic residues; that stretch reads SDKEQNGVQDPR. A CUB domain is found at 46 to 163; that stretch reads HERVVTISGN…PGFCIHYSII (118 aa). A glycan (N-linked (GlcNAc...) asparagine) is linked at N55. Cystine bridges form between C104–C124, C250–C294, C280–C335, and C287–C337.

It belongs to the PDGF/VEGF growth factor family. Homodimer; disulfide-linked. Interacts with PDGFRA homodimers, and with heterodimers formed by PDGFRA and PDGFRB. Interacts (via CUB domain) with PLAT (via kringle domain). Proteolytic removal of the N-terminal CUB domain releasing the core domain is necessary for unmasking the receptor-binding epitopes of the core domain. Cleavage after basic residues in the hinge region (region connecting the CUB and growth factor domains) gives rise to the receptor-binding form. Cleaved by PLAT and PLG. In terms of processing, sumoylated with SUMO1. Post-translationally, N-glycosylated. Highly expressed in the kidney and adrenal gland. In the kidney, it is expressed in arteriolar smooth muscle cells and in epithelial cells of individual segments (at protein level).

The protein resides in the cytoplasm. The protein localises to the cytosol. It localises to the secreted. It is found in the nucleus. Its subcellular location is the cytoplasmic granule. The protein resides in the cell membrane. In terms of biological role, growth factor that plays an essential role in the regulation of embryonic development, cell proliferation, cell migration, survival and chemotaxis. Potent mitogen and chemoattractant for cells of mesenchymal origin. Required for normal skeleton formation during embryonic development, especially for normal development of the craniofacial skeleton and for normal development of the palate. Required for normal skin morphogenesis during embryonic development. Plays an important role in wound healing, where it appears to be involved in three stages: inflammation, proliferation and remodeling. Plays an important role in angiogenesis and blood vessel development. Involved in fibrotic processes, in which transformation of interstitial fibroblasts into myofibroblasts plus collagen deposition occurs. The CUB domain has mitogenic activity in coronary artery smooth muscle cells, suggesting a role beyond the maintenance of the latency of the PDGF domain. In the nucleus, PDGFC seems to have additional function. The polypeptide is Platelet-derived growth factor C (Pdgfc) (Rattus norvegicus (Rat)).